A 156-amino-acid chain; its full sequence is MRPSEKQDNLVRAFKALLKEERFGSQGEIVEALKQEGFENINQSKVSRMLTKFGAVRTRNAKMEMVYCLPTELGVPTVSSSLRELVLDVDHNQALVVIHTGPGAAQLIARMLDSLGKSEGILGVVAGDDTIFITPTLTITTEQLFKSVCELFEYAG.

It belongs to the ArgR family.

It is found in the cytoplasm. It participates in amino-acid biosynthesis; L-arginine biosynthesis [regulation]. Its function is as follows. Regulates arginine biosynthesis genes. This is Arginine repressor from Vibrio vulnificus (strain CMCP6).